Here is a 179-residue protein sequence, read N- to C-terminus: MKKSVLTAFITVVCATSSVMAADDNAITDGSVTFNGKVIAPACTLVAATKDSVVTLPDVSATKLQTNGQVSGVQTDVPIELKDCDTTVTKNATFTFNGTADTTQITAFANQASSDAATNVALQMYMNDGTTAIKPDTETGNILLQDGDQTLTFKVDYIATGKATSGNVNAVTNFHINYY.

The first 21 residues, 1 to 21, serve as a signal peptide directing secretion; it reads MKKSVLTAFITVVCATSSVMA.

It belongs to the fimbrial protein family.

It localises to the fimbrium. Part of the elfADCG fimbrial operon, which could be required for adherence to host epithelial cells. ElfA is an accessory colonization factor that contributes to adherence of bacteria to human intestinal epithelial cells and to animal intestinal tissue in vitro. Binds specifically to laminin, but not to fibronectin or collagen type IV. This is Laminin-binding fimbrial subunit ElfA (elfA) from Escherichia coli O157:H7.